The chain runs to 741 residues: Beta-galactosidase 10 (741 aa).

An N-terminal signal peptide occupies residues Met-1–Ala-29. Asn-31 carries N-linked (GlcNAc...) asparagine glycosylation. Glu-188 serves as the catalytic Proton donor. Glu-257 acts as the Nucleophile in catalysis. 5 N-linked (GlcNAc...) asparagine glycosylation sites follow: Asn-358, Asn-396, Asn-469, Asn-525, and Asn-583.

It belongs to the glycosyl hydrolase 35 family. In terms of tissue distribution, ubiquitous.

It localises to the secreted. It is found in the extracellular space. The protein localises to the apoplast. The catalysed reaction is Hydrolysis of terminal non-reducing beta-D-galactose residues in beta-D-galactosides.. The chain is Beta-galactosidase 10 (BGAL10) from Arabidopsis thaliana (Mouse-ear cress).